Reading from the N-terminus, the 332-residue chain is RNA polymerase principal sigma factor HrdD (332 aa).

Over residues Met-1 to Ser-11 the composition is skewed to basic residues. A disordered region spans residues Met-1–Ala-25. Over residues Ala-13 to Ser-22 the composition is skewed to low complexity. Positions Asp-124–Val-137 match the Polymerase core binding motif. The segment at residues Leu-294–Lys-313 is a DNA-binding region (H-T-H motif).

It belongs to the sigma-70 factor family. As to quaternary structure, interacts transiently with the RNA polymerase catalytic core.

Functionally, sigma factors are initiation factors that promote the attachment of RNA polymerase to specific initiation sites and are then released. This chain is RNA polymerase principal sigma factor HrdD (hrdD), found in Streptomyces coelicolor (strain ATCC BAA-471 / A3(2) / M145).